A 265-amino-acid chain; its full sequence is Homeobox protein engrailed-2-B (265 aa).

Composition is skewed to basic and acidic residues over residues 1 to 12 (MEENEQNNREVE) and 102 to 115 (GEKK…ETLK). Disordered regions lie at residues 1–38 (MEEN…QPHH), 60–138 (INHQ…SSKA), and 156–182 (DRPS…PRTA). Over residues 122–136 (DHSLSSDSDSSQASS) the composition is skewed to low complexity. The homeobox DNA-binding region spans 176-235 (DKRPRTAFTAEQLQRLKAEFQTNRYLTEQRRQSLAQELGLNESQIKIWFQNKRAKIKKST).

Belongs to the engrailed homeobox family.

The protein resides in the nucleus. The polypeptide is Homeobox protein engrailed-2-B (en2-b) (Xenopus laevis (African clawed frog)).